The primary structure comprises 349 residues: Core protein VP7 (349 aa).

N-linked (GlcNAc...) asparagine; by host glycosylation is present at asparagine 45.

It belongs to the orbivirus VP7 family. In terms of assembly, homotrimer.

The protein localises to the virion. Functionally, major structural core protein; binds to structural protein VP3. Constitutes the surface of the AHSV core. The chain is Core protein VP7 (Segment-7) from Camelus dromedarius (Dromedary).